Here is a 152-residue protein sequence, read N- to C-terminus: Nucleoside diphosphate kinase A (152 aa).

Lys-12, Phe-60, Arg-88, and Thr-94 together coordinate ATP. Residue Lys-100 forms a Glycyl lysine isopeptide (Lys-Gly) (interchain with G-Cter in ubiquitin) linkage. Residues Arg-105 and Asn-115 each coordinate ATP. His-118 serves as the catalytic Pros-phosphohistidine intermediate. 3 positions are modified to phosphoserine: Ser-120, Ser-122, and Ser-125.

The protein belongs to the NDK family. In terms of assembly, hexamer of two different chains: An and B (A6, A5B, A4B2, A3B3, A2B4, AB5, B6). Interacts with PRUNE1. Component of the SET complex, composed of at least ANP32A, APEX1, HMGB2, NME1, SET and TREX1. Within this complex, interacts directly with SET. Also interacts with TREX1, but only following translocation to the nucleus. Mg(2+) serves as cofactor.

The protein localises to the cytoplasm. It localises to the nucleus. The catalysed reaction is a 2'-deoxyribonucleoside 5'-diphosphate + ATP = a 2'-deoxyribonucleoside 5'-triphosphate + ADP. It carries out the reaction a ribonucleoside 5'-diphosphate + ATP = a ribonucleoside 5'-triphosphate + ADP. With respect to regulation, autophosphorylation at His-118 increases serine/threonine protein kinase activity of the enzyme. Interaction with the SET complex inhibits exonuclease activity. In terms of biological role, major role in the synthesis of nucleoside triphosphates other than ATP. The ATP gamma phosphate is transferred to the NDP beta phosphate via a ping-pong mechanism, using a phosphorylated active-site intermediate. Possesses nucleoside-diphosphate kinase, serine/threonine-specific protein kinase, geranyl and farnesyl pyrophosphate kinase, histidine protein kinase and 3'-5' exonuclease activities. Involved in cell proliferation, differentiation and development, signal transduction, G protein-coupled receptor endocytosis, and gene expression. Required for neural development including neural patterning and cell fate determination. During GZMA-mediated cell death, works in concert with TREX1. NME1 nicks one strand of DNA and TREX1 removes bases from the free 3' end to enhance DNA damage and prevent DNA end reannealing and rapid repair. The protein is Nucleoside diphosphate kinase A (Nme1) of Rattus norvegicus (Rat).